Reading from the N-terminus, the 435-residue chain is ATP-dependent RNA helicase RhlB (435 aa).

Residues 9 to 37 carry the Q motif motif; sequence QKFADFSLQTEIKTALNESGFEYCTPIQA. Residues 40–219 form the Helicase ATP-binding domain; that stretch reads LPILLQKKDI…YDHMNEPEKV (180 aa). 53–60 is a binding site for ATP; the sequence is AQTGTGKT. The short motif at 165 to 168 is the DEAD box element; it reads DEAD. Positions 243 to 390 constitute a Helicase C-terminal domain; the sequence is KMRLLLTLLE…VTNYDSEALL (148 aa). A disordered region spans residues 395-435; that stretch reads APVRVHRKHNSRPQGRSGSGGKPRSGNRNAPRRHDKTRRHS. Basic residues predominate over residues 424–435; that stretch reads APRRHDKTRRHS.

It belongs to the DEAD box helicase family. RhlB subfamily. As to quaternary structure, component of the RNA degradosome, which is a multiprotein complex involved in RNA processing and mRNA degradation.

It is found in the cytoplasm. The catalysed reaction is ATP + H2O = ADP + phosphate + H(+). Its function is as follows. DEAD-box RNA helicase involved in RNA degradation. Has RNA-dependent ATPase activity and unwinds double-stranded RNA. The sequence is that of ATP-dependent RNA helicase RhlB from Shewanella sediminis (strain HAW-EB3).